We begin with the raw amino-acid sequence, 254 residues long: Small ribosomal subunit protein uS2 (254 aa).

Belongs to the universal ribosomal protein uS2 family.

This is Small ribosomal subunit protein uS2 from Legionella pneumophila subsp. pneumophila (strain Philadelphia 1 / ATCC 33152 / DSM 7513).